Reading from the N-terminus, the 526-residue chain is ATP synthase subunit alpha (526 aa).

171–178 (GDRQTGKT) lines the ATP pocket.

The protein belongs to the ATPase alpha/beta chains family. F-type ATPases have 2 components, CF(1) - the catalytic core - and CF(0) - the membrane proton channel. CF(1) has five subunits: alpha(3), beta(3), gamma(1), delta(1), epsilon(1). CF(0) has four main subunits: a(1), b(1), b'(1) and c(9-12).

The protein resides in the cell inner membrane. The catalysed reaction is ATP + H2O + 4 H(+)(in) = ADP + phosphate + 5 H(+)(out). Functionally, produces ATP from ADP in the presence of a proton gradient across the membrane. The alpha chain is a regulatory subunit. The sequence is that of ATP synthase subunit alpha from Chlorobium chlorochromatii (strain CaD3).